Consider the following 632-residue polypeptide: Phospholipid:diacylglycerol acyltransferase (632 aa).

A compositionally biased stretch (basic residues) spans 1–15; it reads MASSKKSKTHKKKKE. Residues 1–47 form a disordered region; sequence MASSKKSKTHKKKKEVKSPIDLPNSKKPTRALSEQPSASETQSVSNK. Topologically, residues 1–56 are cytoplasmic; sequence MASSKKSKTHKKKKEVKSPIDLPNSKKPTRALSEQPSASETQSVSNKSRKSKFGKR. A compositionally biased stretch (polar residues) spans 32–46; the sequence is LSEQPSASETQSVSN. A helical membrane pass occupies residues 57-77; that stretch reads LNFILGAILGICGAFFFAVGD. Residues 78–632 are Lumenal-facing; sequence DNAVFDPATL…NEINLDKPRN (555 aa). Asp-136 is a substrate binding site. The Acyl-ester intermediate role is filled by Ser-293. Met-294 contacts substrate. Catalysis depends on charge relay system residues Asp-535 and His-586.

It belongs to the AB hydrolase superfamily. Lipase family.

The protein localises to the endoplasmic reticulum membrane. It carries out the reaction a glycerophospholipid + a 1,2-diacyl-sn-glycerol = a monoacylglycerophospholipid + a triacyl-sn-glycerol. The protein operates within glycerolipid metabolism; triacylglycerol biosynthesis. Catalyzes triacylglycerol (TAG) formation by an acyl-CoA independent pathway. The enzyme specifically transfers acyl groups from the sn-2 position of a phospholipid to diacylglycerol (DAG), thus forming an sn-1-lysophospholipid. Plays a major role in triacylglycerol formation at log phase. Involved in lipid particle synthesis from the endoplasmic reticulum, promoting localized TAG production at discrete ER subdomains. This chain is Phospholipid:diacylglycerol acyltransferase (plh1), found in Schizosaccharomyces pombe (strain 972 / ATCC 24843) (Fission yeast).